A 363-amino-acid polypeptide reads, in one-letter code: MDAARRGDTQPVMWTTGWLLLLPLLLCEGAQALECYSCVQKADDGCSPHRMKTVKCGPGVDVCTEAVGAVETIHGQFSVAVRGCGSGIPGKNDRGLDLHGLLAFFQLQQCSEDRCNAKLNLTLRGLNPAGNESAYEPNGAECYSCVGLSREKCQGSMPPVVNCYNASGRVYKGCFDGNVTLTAANVTVSLPVRGCVQDETCTRDGVTGPGFTLSGSCCQGPRCNADLRNKTYFSPRIPPLVLLPPPTTAAPSTRAQNSSSTTSTAAPTTTTSIIKPTTAQASHTSPHEMDLEVIQEEGASLSGGAAGHGGTAGHGGAAGHQDRSNMEKYPGKGGAQIPAKGGSGTLGSWLSAVLLTVVAGAML.

A signal peptide spans 1-32 (MDAARRGDTQPVMWTTGWLLLLPLLLCEGAQA). One can recognise a UPAR/Ly6 1 domain in the interval 35–128 (CYSCVQKADD…LNLTLRGLNP (94 aa)). N-linked (GlcNAc...) asparagine glycosylation is found at Asn-120, Asn-131, Asn-178, and Asn-185. Residues 142–224 (CYSCVGLSRE…GSCCQGPRCN (83 aa)) form the UPAR/Ly6 2 domain. The segment covering 238–248 (PPLVLLPPPTT) has biased composition (pro residues). Disordered regions lie at residues 238–287 (PPLV…TSPH) and 301–336 (LSGGAAGHGGTAGHGGAAGHQDRSNMEKYPGKGGAQ). Residues 249–278 (AAPSTRAQNSSSTTSTAAPTTTTSIIKPTT) are compositionally biased toward low complexity. Positions 304–318 (GAAGHGGTAGHGGAA) are enriched in gly residues. Basic and acidic residues predominate over residues 320–330 (HQDRSNMEKYP). Ser-343 carries the GPI-anchor amidated serine lipid modification. Positions 344–363 (GTLGSWLSAVLLTVVAGAML) are cleaved as a propeptide — removed in mature form.

In terms of assembly, binds laminin-1 and laminin-5. Interacts with LGALS3. Interacts with AGR2 and AGR3.

Its subcellular location is the cell membrane. Functionally, supports cell migration. May be involved in tumor progression. This chain is Ly6/PLAUR domain-containing protein 3 (Lypd3), found in Mus musculus (Mouse).